We begin with the raw amino-acid sequence, 34 residues long: Omega-ctenitoxin-Pn2a (34 aa).

3 disulfides stabilise this stretch: Cys-2–Cys-16, Cys-9–Cys-26, and Cys-15–Cys-28.

The protein belongs to the neurotoxin 02 (plectoxin) family. 01 (Tx3) subfamily. Expressed by the venom gland.

It localises to the secreted. In terms of biological role, inhibits all known high-voltage activated calcium channels (L-, P/Q- and R-type currents) (Cav), and most effectively the P/Q- (Cav2.1/CACNA1A) and R-type (Cav2.3/CACNA1E) currents. In rat brain, inhibits glutamate release, neuronal death and loss of neurotransmission in the hippocampus resulting from ischemia. In vivo, induces rapid general flaccid paralysis followed by death in 10-30 minutes at dose levels of 5 ug per mouse. This is Omega-ctenitoxin-Pn2a from Phoneutria nigriventer (Brazilian armed spider).